Consider the following 371-residue polypeptide: 4-hydroxyphenylpyruvate dioxygenase-like protein (371 aa).

VOC domains lie at 7 to 135 and 160 to 328; these read RLCH…LLQR and HVDH…VFTK. His-163, His-258, and Glu-339 together coordinate Fe cation.

Belongs to the 4HPPD family. Requires Fe cation as cofactor.

The protein resides in the mitochondrion. It carries out the reaction 3-(4-hydroxyphenyl)pyruvate + O2 = (S)-4-hydroxymandelate + CO2. Its function is as follows. Iron-dependent dioxygenase that catalyzes the conversion of 4-hydroxyphenylpyruvate (4-HPPA) to 4-hydroxymandelate (4-HMA) in the mitochondria, one of the steps in the biosynthesis of coenzyme Q10 from tyrosine. The polypeptide is 4-hydroxyphenylpyruvate dioxygenase-like protein (Rattus norvegicus (Rat)).